The sequence spans 240 residues: BLOC-1-related complex subunit 8 homolog (240 aa).

Disordered regions lie at residues 1 to 33 (MSSI…GSHG) and 163 to 240 (KTFS…EKIN). Composition is skewed to low complexity over residues 7 to 26 (SSTG…NNIS) and 163 to 179 (KTFS…QQQQ). Over residues 180–190 (TNLTPSKPTLS) the composition is skewed to polar residues. Residues 196-205 (DNNNNNNNLN) show a composition bias toward low complexity. The span at 208-240 (EKIEKEEKIEKEDEGKEKDEKEKDDKDLNEKIN) shows a compositional bias: basic and acidic residues. Residues 211–239 (EKEEKIEKEDEGKEKDEKEKDDKDLNEKI) are a coiled coil.

The protein belongs to the BORCS8 family.

It is found in the lysosome membrane. In terms of biological role, may participate in the coupling of lysosomes to microtubule plus-end-directed kinesin motor. The sequence is that of BLOC-1-related complex subunit 8 homolog from Dictyostelium discoideum (Social amoeba).